The primary structure comprises 429 residues: Cleavage stimulation factor subunit 50 (429 aa).

The interval 20–41 (LNALIVAHLRHHNLSQVASAVA) is hydrophobic. WD repeat units follow at residues 121–160 (EHKSVVRCARFSPDGMFFATGGADTSIKLFEVPKVKQMIS), 174–213 (DHAEPINDLDFHPRSTILISSAKDNCIKFFDFSKTTAKRA), 218–257 (QDTHNVRSISFHPSGEFLLAGTDHPIPHLYDVNTYQCFLP), 264–303 (GVSGAINQVRYSSTGSIYITASKDGAIRLFDGVSAKCVRS), 308–347 (HGKSEVTSAVFTKDQRFVLSSGKDSTVKLWEIGSGRMVKE), 351–392 (AKRV…KVAK), and 396–429 (NHNGAPRWIEHSPVESVFVTCGIDRSIRFWKESV).

As to quaternary structure, homodimer. Belongs to the CSTF complex. Forms a complex with cleavage and polyadenylation specificity factor (CPSF) subunits CSTF64, PABN3, CPSF30, FIPS5 and CPSF100.

It localises to the nucleus. In terms of biological role, one of the multiple factors required for polyadenylation and 3'-end cleavage of pre-mRNAs. May be responsible for the interaction of CSTF with other factors to form a stable complex on the pre-mRNA. The polypeptide is Cleavage stimulation factor subunit 50 (Arabidopsis thaliana (Mouse-ear cress)).